The sequence spans 1367 residues: DNA-directed RNA polymerase subunit beta' (1367 aa).

Positions 1-34 (MTSTSPKSRKSSSKRKGSKKKAARSKNVIPPLSK) are disordered. The span at 7–24 (KSRKSSSKRKGSKKKAAR) shows a compositional bias: basic residues. The Zn(2+) site is built by cysteine 250, cysteine 317, cysteine 324, and cysteine 327. The segment at 1306–1367 (SVLDDPSDAD…LQEEGLLSDE (62 aa)) is disordered. A compositionally biased stretch (low complexity) spans 1355 to 1367 (LEGLQEEGLLSDE).

This sequence belongs to the RNA polymerase beta' chain family. RpoC2 subfamily. In cyanobacteria the RNAP catalytic core is composed of 2 alpha, 1 beta, 1 beta', 1 gamma and 1 omega subunit. When a sigma factor is associated with the core the holoenzyme is formed, which can initiate transcription. The cofactor is Zn(2+).

It carries out the reaction RNA(n) + a ribonucleoside 5'-triphosphate = RNA(n+1) + diphosphate. DNA-dependent RNA polymerase catalyzes the transcription of DNA into RNA using the four ribonucleoside triphosphates as substrates. This Prochlorococcus marinus (strain SARG / CCMP1375 / SS120) protein is DNA-directed RNA polymerase subunit beta'.